Reading from the N-terminus, the 311-residue chain is Iron-binding protein YfeA (311 aa).

An N-terminal signal peptide occupies residues 1 to 31 (MIERLNSPFLRAAALFTIVAFSSLISTAALA). Residues histidine 76, histidine 141, glutamate 207, and aspartate 282 each coordinate Fe(2+).

This sequence belongs to the bacterial solute-binding protein 9 family. Monomer.

It is found in the periplasm. In terms of biological role, part of the ATP-binding cassette (ABC) transport system YfeABC involved in iron import. Binds iron with high affinity and specificity and delivers it to the membrane permease for translocation into the cytoplasm. Also binds Mn(2+) and Zn(2+). The protein is Iron-binding protein YfeA (yfeA) of Yersinia pestis.